Consider the following 584-residue polypeptide: Aspartate--tRNA(Asp/Asn) ligase (584 aa).

Residue glutamate 173 coordinates L-aspartate. The tract at residues 197–200 is aspartate; it reads QLFK. Arginine 219 provides a ligand contact to L-aspartate. ATP is bound by residues 219-221 and glutamine 228; that span reads RDE. L-aspartate is bound at residue histidine 446. Glutamate 476 contacts ATP. Arginine 483 lines the L-aspartate pocket. 528 to 531 contributes to the ATP binding site; sequence GLDR.

The protein belongs to the class-II aminoacyl-tRNA synthetase family. Type 1 subfamily. As to quaternary structure, homodimer.

It localises to the cytoplasm. The enzyme catalyses tRNA(Asx) + L-aspartate + ATP = L-aspartyl-tRNA(Asx) + AMP + diphosphate. Aspartyl-tRNA synthetase with relaxed tRNA specificity since it is able to aspartylate not only its cognate tRNA(Asp) but also tRNA(Asn). Reaction proceeds in two steps: L-aspartate is first activated by ATP to form Asp-AMP and then transferred to the acceptor end of tRNA(Asp/Asn). This chain is Aspartate--tRNA(Asp/Asn) ligase, found in Sulfurovum sp. (strain NBC37-1).